We begin with the raw amino-acid sequence, 515 residues long: Pescadillo homolog (515 aa).

Positions 270-327 (EVLAALNHTLKIIQTQEEDLEVDEFPIDPNSEDAEAIQAQKEEETKLERLKNLFSECK) form a coiled coil. The 94-residue stretch at 318 to 411 (RLKNLFSECK…KLLPVEEYFP (94 aa)) folds into the BRCT domain. Residues 477–515 (RLYEKIMHSKKKKRSEVRKLESKRKVHDEEKAKKKLKSS) are disordered. Positions 484 to 501 (HSKKKKRSEVRKLESKRK) are enriched in basic residues.

It belongs to the pescadillo family.

The protein localises to the nucleus. Its subcellular location is the nucleolus. It is found in the nucleoplasm. Functionally, required for maturation of ribosomal RNAs and formation of the large ribosomal subunit. The sequence is that of Pescadillo homolog from Nematostella vectensis (Starlet sea anemone).